The following is a 372-amino-acid chain: Queuine tRNA-ribosyltransferase (372 aa).

The Proton acceptor role is filled by Asp-92. Substrate-binding positions include 92–96 (DSGGY), Asp-146, Gln-188, and Gly-215. Residues 246-252 (GIGTIRE) form an RNA binding region. Asp-265 functions as the Nucleophile in the catalytic mechanism. Residues 270–274 (TRLGR) are RNA binding; important for wobble base 34 recognition. Positions 303, 305, 308, and 334 each coordinate Zn(2+).

It belongs to the queuine tRNA-ribosyltransferase family. As to quaternary structure, homodimer. Within each dimer, one monomer is responsible for RNA recognition and catalysis, while the other monomer binds to the replacement base PreQ1. It depends on Zn(2+) as a cofactor.

The catalysed reaction is 7-aminomethyl-7-carbaguanine + guanosine(34) in tRNA = 7-aminomethyl-7-carbaguanosine(34) in tRNA + guanine. The protein operates within tRNA modification; tRNA-queuosine biosynthesis. Catalyzes the base-exchange of a guanine (G) residue with the queuine precursor 7-aminomethyl-7-deazaguanine (PreQ1) at position 34 (anticodon wobble position) in tRNAs with GU(N) anticodons (tRNA-Asp, -Asn, -His and -Tyr). Catalysis occurs through a double-displacement mechanism. The nucleophile active site attacks the C1' of nucleotide 34 to detach the guanine base from the RNA, forming a covalent enzyme-RNA intermediate. The proton acceptor active site deprotonates the incoming PreQ1, allowing a nucleophilic attack on the C1' of the ribose to form the product. After dissociation, two additional enzymatic reactions on the tRNA convert PreQ1 to queuine (Q), resulting in the hypermodified nucleoside queuosine (7-(((4,5-cis-dihydroxy-2-cyclopenten-1-yl)amino)methyl)-7-deazaguanosine). The polypeptide is Queuine tRNA-ribosyltransferase (Prochlorococcus marinus (strain SARG / CCMP1375 / SS120)).